Here is a 117-residue protein sequence, read N- to C-terminus: Large ribosomal subunit protein uL18 (117 aa).

The protein belongs to the universal ribosomal protein uL18 family. As to quaternary structure, part of the 50S ribosomal subunit; part of the 5S rRNA/L5/L18/L25 subcomplex. Contacts the 5S and 23S rRNAs.

In terms of biological role, this is one of the proteins that bind and probably mediate the attachment of the 5S RNA into the large ribosomal subunit, where it forms part of the central protuberance. This Polynucleobacter asymbioticus (strain DSM 18221 / CIP 109841 / QLW-P1DMWA-1) (Polynucleobacter necessarius subsp. asymbioticus) protein is Large ribosomal subunit protein uL18.